The chain runs to 251 residues: Triosephosphate isomerase (251 aa).

Residue 10 to 12 coordinates substrate; the sequence is NWK. Residue His-95 is the Electrophile of the active site. Glu-167 functions as the Proton acceptor in the catalytic mechanism. Substrate contacts are provided by residues Gly-173, Ser-213, and 234–235; that span reads GG.

Belongs to the triosephosphate isomerase family. Homodimer.

Its subcellular location is the cytoplasm. It carries out the reaction D-glyceraldehyde 3-phosphate = dihydroxyacetone phosphate. The protein operates within carbohydrate biosynthesis; gluconeogenesis. Its pathway is carbohydrate degradation; glycolysis; D-glyceraldehyde 3-phosphate from glycerone phosphate: step 1/1. Functionally, involved in the gluconeogenesis. Catalyzes stereospecifically the conversion of dihydroxyacetone phosphate (DHAP) to D-glyceraldehyde-3-phosphate (G3P). The chain is Triosephosphate isomerase from Acetivibrio thermocellus (strain ATCC 27405 / DSM 1237 / JCM 9322 / NBRC 103400 / NCIMB 10682 / NRRL B-4536 / VPI 7372) (Clostridium thermocellum).